The following is a 461-amino-acid chain: Growth/differentiation factor 7 (461 aa).

Residues 1 to 19 (MDLSAAAALCLWLLSACRP) form the signal peptide. The propeptide occupies 20-315 (RDGLEAAAVL…ANLGGRRRRR (296 aa)). N79 carries N-linked (GlcNAc...) asparagine glycosylation. Residues 287–360 (LRAAAEPPPD…GHGRRGRSRC (74 aa)) are disordered. Gly residues predominate over residues 323–350 (GAQGSGGGGGGGGGGGGGGGGGGGGAGR). Over residues 351–360 (GHGRRGRSRC) the composition is skewed to basic residues. Disulfide bonds link C360–C426, C389–C458, and C393–C460.

It belongs to the TGF-beta family. In terms of assembly, homodimer; disulfide-linked.

The protein localises to the secreted. The chain is Growth/differentiation factor 7 (Gdf7) from Mus musculus (Mouse).